A 275-amino-acid chain; its full sequence is Diaminopimelate epimerase (275 aa).

Residues Asn12, Gln45, and Asn65 each coordinate substrate. The Proton donor role is filled by Cys74. Residues 75–76 (GN), Asn158, Asn191, and 209–210 (ER) each bind substrate. Cys218 serves as the catalytic Proton acceptor. Substrate is bound at residue 219–220 (GT).

This sequence belongs to the diaminopimelate epimerase family. Homodimer.

The protein resides in the cytoplasm. It catalyses the reaction (2S,6S)-2,6-diaminopimelate = meso-2,6-diaminopimelate. Its pathway is amino-acid biosynthesis; L-lysine biosynthesis via DAP pathway; DL-2,6-diaminopimelate from LL-2,6-diaminopimelate: step 1/1. Functionally, catalyzes the stereoinversion of LL-2,6-diaminopimelate (L,L-DAP) to meso-diaminopimelate (meso-DAP), a precursor of L-lysine and an essential component of the bacterial peptidoglycan. In Shewanella oneidensis (strain ATCC 700550 / JCM 31522 / CIP 106686 / LMG 19005 / NCIMB 14063 / MR-1), this protein is Diaminopimelate epimerase.